The sequence spans 494 residues: Glycerol kinase (494 aa).

T13 serves as a coordination point for ADP. The ATP site is built by T13, T14, and S15. Residue T13 coordinates sn-glycerol 3-phosphate. R17 lines the ADP pocket. Sn-glycerol 3-phosphate-binding residues include R83, E84, Y135, and D244. Residues R83, E84, Y135, D244, and Q245 each coordinate glycerol. ADP-binding residues include T266 and G309. The ATP site is built by T266, G309, Q313, and G410. G410 and N414 together coordinate ADP.

It belongs to the FGGY kinase family.

The enzyme catalyses glycerol + ATP = sn-glycerol 3-phosphate + ADP + H(+). The protein operates within polyol metabolism; glycerol degradation via glycerol kinase pathway; sn-glycerol 3-phosphate from glycerol: step 1/1. Its activity is regulated as follows. Inhibited by fructose 1,6-bisphosphate (FBP). Key enzyme in the regulation of glycerol uptake and metabolism. Catalyzes the phosphorylation of glycerol to yield sn-glycerol 3-phosphate. The sequence is that of Glycerol kinase from Shewanella baltica (strain OS195).